Consider the following 183-residue polypeptide: Large ribosomal subunit protein eL18 (183 aa).

The interval 150–183 (RHFGPAPGAPRSHTKPYVRTKGHERARPRRRSNV) is disordered. Basic residues predominate over residues 161 to 183 (SHTKPYVRTKGHERARPRRRSNV).

It belongs to the eukaryotic ribosomal protein eL18 family.

It localises to the cytoplasm. This is Large ribosomal subunit protein eL18 (RpL18) from Spodoptera frugiperda (Fall armyworm).